The following is a 297-amino-acid chain: TATA-box-binding protein (297 aa).

Residues 52–116 (EEQQRQQQQA…ITPATPASES (65 aa)) form a disordered region. Low complexity-rich tracts occupy residues 56 to 78 (RQQQQAQQSTSQQGNQGSGQTPQ) and 104 to 114 (MTPITPATPAS). 2 repeat units span residues 123–199 (LQNI…ARVV) and 213–290 (IQNM…YPIL).

It belongs to the TBP family. Belongs to the TFIID complex together with the TBP-associated factors (TAFs). Binds DNA as monomer. The N-terminal domain is extensively phosphorylated.

The protein localises to the nucleus. General transcription factor that functions at the core of the DNA-binding multiprotein factor TFIID. Binding of TFIID to the TATA box is the initial transcriptional step of the pre-initiation complex (PIC), playing a role in the activation of eukaryotic genes transcribed by RNA polymerase II. Members of the TBP family are differentially required to regulate transcription and development during early embryogenesis. Binds to the promoters of select genes. The chain is TATA-box-binding protein from Xenopus tropicalis (Western clawed frog).